The following is a 190-amino-acid chain: Lipocalin Can f 6.0101 (190 aa).

Positions 1-15 (MKLLLLCLGLILVHA) are cleaved as a signal peptide. The segment at 43–54 (SDIKEKIEENGS) is igE-binding. Residues asparagine 52 and asparagine 67 are each glycosylated (N-linked (GlcNAc...) asparagine). An igE-binding region spans residues 76–83 (TKVNGKCT). Residues cysteine 82 and cysteine 175 are joined by a disulfide bond. Residue asparagine 90 is glycosylated (N-linked (GlcNAc...) asparagine). The interval 91 to 97 (KTEKDGE) is igE-binding. A no IgE-binding region spans residues 100-109 (VVHDGYNLFR). 2 igE-binding regions span residues 125-132 (NVNQEQEF) and 139-152 (GRKP…KEKF).

The protein belongs to the calycin superfamily. Lipocalin family. As to quaternary structure, monomer. In terms of tissue distribution, expressed in saliva (at protein level). Expressed in dander (at protein level). According to PubMed:22104604, expressed in submaxillary gland. In contrast, according to PubMed:22515174, not expressed in submaxillary gland. Expressed in bladder and skin, but not in tongue.

It localises to the secreted. In Canis lupus familiaris (Dog), this protein is Lipocalin Can f 6.0101.